Consider the following 566-residue polypeptide: Arginine--tRNA ligase (566 aa).

The 'HIGH' region motif lies at 121 to 131 (PNIAKPMSMGH).

This sequence belongs to the class-I aminoacyl-tRNA synthetase family. In terms of assembly, monomer.

Its subcellular location is the cytoplasm. It catalyses the reaction tRNA(Arg) + L-arginine + ATP = L-arginyl-tRNA(Arg) + AMP + diphosphate. This chain is Arginine--tRNA ligase, found in Oenococcus oeni (strain ATCC BAA-331 / PSU-1).